The primary structure comprises 345 residues: Protein-glutamate methylesterase/protein-glutamine glutaminase (345 aa).

The Response regulatory domain occupies 5 to 123 (KVIVVDDSVL…ELSKMKDDLI (119 aa)). Position 56 is a 4-aspartylphosphate (Asp56). In terms of domain architecture, CheB-type methylesterase spans 153-343 (SSDSIEAVVI…DEIIKIVRGL (191 aa)). Active-site residues include Ser165, His192, and Asp285.

Belongs to the CheB family. Post-translationally, phosphorylated by CheA. Phosphorylation of the N-terminal regulatory domain activates the methylesterase activity.

It localises to the cytoplasm. It catalyses the reaction [protein]-L-glutamate 5-O-methyl ester + H2O = L-glutamyl-[protein] + methanol + H(+). The enzyme catalyses L-glutaminyl-[protein] + H2O = L-glutamyl-[protein] + NH4(+). Functionally, involved in chemotaxis. Part of a chemotaxis signal transduction system that modulates chemotaxis in response to various stimuli. Catalyzes the demethylation of specific methylglutamate residues introduced into the chemoreceptors (methyl-accepting chemotaxis proteins or MCP) by CheR. Also mediates the irreversible deamidation of specific glutamine residues to glutamic acid. This is Protein-glutamate methylesterase/protein-glutamine glutaminase from Clostridium acetobutylicum (strain ATCC 824 / DSM 792 / JCM 1419 / IAM 19013 / LMG 5710 / NBRC 13948 / NRRL B-527 / VKM B-1787 / 2291 / W).